Consider the following 244-residue polypeptide: Lipoprotein-releasing system ATP-binding protein LolD (244 aa).

The ABC transporter domain occupies isoleucine 19–valine 244. Residue glycine 55–serine 62 participates in ATP binding.

It belongs to the ABC transporter superfamily. Lipoprotein translocase (TC 3.A.1.125) family. In terms of assembly, the complex is composed of two ATP-binding proteins (LolD) and two transmembrane proteins (LolC and LolE).

It is found in the cell inner membrane. Part of the ABC transporter complex LolCDE involved in the translocation of mature outer membrane-directed lipoproteins, from the inner membrane to the periplasmic chaperone, LolA. Responsible for the formation of the LolA-lipoprotein complex in an ATP-dependent manner. The sequence is that of Lipoprotein-releasing system ATP-binding protein LolD from Xanthomonas axonopodis pv. citri (strain 306).